A 713-amino-acid chain; its full sequence is Nuclear poly(A) polymerase 1 (713 aa).

ATP-binding positions include 91-93 (FGS), 103-106 (ADID), Asp-159, Tyr-229, and 238-239 (GI). Positions 104, 106, and 159 each coordinate Mg(2+). The disordered stretch occupies residues 480 to 555 (FVFPGGVRPS…TLTDQPRNSK (76 aa)). Positions 507-526 (SSTSSAPAATTTTTEMSSES) are enriched in low complexity.

This sequence belongs to the poly(A) polymerase family. As to quaternary structure, monomer. Forms a complex with cleavage and polyadenylation specificity factor (CPSF) subunit PAPS4. Mg(2+) is required as a cofactor. The cofactor is Mn(2+). In terms of tissue distribution, expressed in stems, cotyledons, hypocotyls, radicle, leaves, and, to a lower extent, in roots (including primary and secondary roots as well as root tips) and flowers. In radicle, roots and leaves, mainly present in vascular tissues.

Its subcellular location is the nucleus. It catalyses the reaction RNA(n) + ATP = RNA(n)-3'-adenine ribonucleotide + diphosphate. Essential protein. Polymerase that creates the 3'-poly(A) tail of mRNA's. Also required for the endoribonucleolytic cleavage reaction at some polyadenylation sites. May acquire specificity through interaction with a cleavage and polyadenylation specificity factor (CPSF) at its C-terminus. This is Nuclear poly(A) polymerase 1 from Arabidopsis thaliana (Mouse-ear cress).